A 386-amino-acid chain; its full sequence is Patatin group M-3 (386 aa).

The first 23 residues, 1 to 23 (MATTKSFLILFFMILATTSSTCA), serve as a signal peptide directing secretion. The PNPLA domain occupies 32–229 (LSIDGGGIKG…TVGDPALLSL (198 aa)). The short motif at 36–41 (GGGIKG) is the GXGXXG element. The short motif at 75 to 79 (GTSTG) is the GXSXG element. Catalysis depends on Ser-77, which acts as the Nucleophile. Residue Asn-115 is glycosylated (N-linked (GlcNAc...) asparagine). The active-site Proton acceptor is Asp-215. The short motif at 215 to 217 (DGG) is the DGA/G element. Positions 321 to 384 (ENALTGTTTE…DRKKLRANKA (64 aa)) form a coiled coil.

Belongs to the patatin family. In terms of tissue distribution, tuber.

It localises to the vacuole. Probable lipolytic acyl hydrolase (LAH), an activity which is thought to be involved in the response of tubers to pathogens. The polypeptide is Patatin group M-3 (Solanum tuberosum (Potato)).